A 504-amino-acid chain; its full sequence is Maturase K (504 aa).

This sequence belongs to the intron maturase 2 family. MatK subfamily.

It is found in the plastid. The protein resides in the chloroplast. Functionally, usually encoded in the trnK tRNA gene intron. Probably assists in splicing its own and other chloroplast group II introns. In Prionotes cerinthoides (Climbing heath), this protein is Maturase K.